A 496-amino-acid polypeptide reads, in one-letter code: Probable CtpA-like serine protease (496 aa).

The span at 1 to 16 shows a compositional bias: basic and acidic residues; that stretch reads MDDKQHTSSSDDERAE. Positions 1–27 are disordered; that stretch reads MDDKQHTSSSDDERAEIATSNQDQETN. Residues 18-27 show a composition bias toward polar residues; the sequence is ATSNQDQETN. The helical transmembrane segment at 39–59 threads the bilayer; sequence FISILIGTTLITAVITVVAYI. Positions 124–206 constitute a PDZ domain; it reads TKSFNEGVSG…TEVTLTVQRG (83 aa). Active-site charge relay system residues include serine 329, aspartate 340, and lysine 354.

The protein belongs to the peptidase S41A family.

The protein localises to the cell membrane. This is Probable CtpA-like serine protease from Staphylococcus aureus (strain Mu50 / ATCC 700699).